The chain runs to 399 residues: Acetate kinase (399 aa).

Residue N7 coordinates Mg(2+). K14 is a binding site for ATP. R90 is a substrate binding site. D147 (proton donor/acceptor) is an active-site residue. ATP is bound by residues 207-211, 282-284, and 330-334; these read HLGNG, DFR, and GIGEN. E385 provides a ligand contact to Mg(2+).

Belongs to the acetokinase family. In terms of assembly, homodimer. It depends on Mg(2+) as a cofactor. The cofactor is Mn(2+).

It localises to the cytoplasm. The catalysed reaction is acetate + ATP = acetyl phosphate + ADP. Its pathway is metabolic intermediate biosynthesis; acetyl-CoA biosynthesis; acetyl-CoA from acetate: step 1/2. Its function is as follows. Catalyzes the formation of acetyl phosphate from acetate and ATP. Can also catalyze the reverse reaction. The chain is Acetate kinase from Caldicellulosiruptor bescii (strain ATCC BAA-1888 / DSM 6725 / KCTC 15123 / Z-1320) (Anaerocellum thermophilum).